The primary structure comprises 125 residues: Calcitonin receptor-stimulating peptide 1 (125 aa).

The signal sequence occupies residues 1–25 (MGFWKFPPFLVLSILVLYQAGMFHA). Residues 26–77 (APFRSVFDGRFDPATLDEEESRLLLAAMVNDYEQMRARESEKAQKTEGSRIQ) constitute a propeptide that is removed on maturation. A disulfide bridge connects residues Cys81 and Cys86.

Belongs to the calcitonin family.

The protein resides in the secreted. Its function is as follows. Stimulates cAMP production in porcine kidney cell line LLC-PK1 via the calcitonin receptor (CT) but not via the CT-like (CL) receptor. In Bos taurus (Bovine), this protein is Calcitonin receptor-stimulating peptide 1 (CRSP1).